A 253-amino-acid polypeptide reads, in one-letter code: Mediator of RNA polymerase II transcription subunit 19 (253 aa).

Disordered regions lie at residues 18–49 and 157–253; these read EQYS…TLKT and GPLP…TQVF. Over residues 21–40 the composition is skewed to low complexity; the sequence is SPKSSPRAGGAGGRSPVVAR. Composition is skewed to basic residues over residues 165–183 and 220–233; these read HLKS…KHKY and RKKR…KKQR.

This sequence belongs to the Mediator complex subunit 19 family. As to quaternary structure, component of the Mediator complex.

It is found in the nucleus. In terms of biological role, component of the Mediator complex, a coactivator involved in the regulated transcription of nearly all RNA polymerase II-dependent genes. Mediator functions as a bridge to convey information from gene-specific regulatory proteins to the basal RNA polymerase II transcription machinery. Mediator is recruited to promoters by direct interactions with regulatory proteins and serves as a scaffold for the assembly of a functional preinitiation complex with RNA polymerase II and the general transcription factors. The protein is Mediator of RNA polymerase II transcription subunit 19 (MED19) of Aedes aegypti (Yellowfever mosquito).